The chain runs to 382 residues: Opsin-VA (382 aa).

Residues 1 to 35 (MELFPVAVNGVSHAEDPFSGPLTFIAPWNYKVLAT) are Extracellular-facing. A helical membrane pass occupies residues 36 to 56 (LMFVVTAASLSENFAVMLVTF). At 57–67 (RFTQLRKPLNY) the chain is on the cytoplasmic side. A helical membrane pass occupies residues 68 to 88 (IIVNLSLADFLVSLTGGTISF). Topologically, residues 89 to 103 (LTNYHGYFFLGKWAC) are extracellular. An intrachain disulfide couples cysteine 103 to cysteine 180. A helical transmembrane segment spans residues 104–124 (VLEGFAVTYFGIVALWSLAVL). Residues 125–147 (AFERFFVICRPLGNIRLRGKHAA) lie on the Cytoplasmic side of the membrane. The chain crosses the membrane as a helical span at residues 148 to 168 (LGLLFVWTFSFIWTIPPVLGW). At 169–193 (SSYTVSKIGTTCEPNWYSGNFHDHT) the chain is on the extracellular side. Residues 194–214 (FIIAFFITCFILPLGVIVVCY) traverse the membrane as a helical segment. The Cytoplasmic segment spans residues 215-244 (CKLIKKLRKVSNTHGRLGNARKPERQVTRM). Residues 245 to 265 (VVVMIVAFMVAWTPYAAFSIV) form a helical membrane-spanning segment. Over 266–279 (VTAHPSIHLDPRLA) the chain is Extracellular. Residues 280-300 (AAPAFFSKTAAVYNPVIYVFM) traverse the membrane as a helical segment. Residue lysine 287 is modified to N6-(retinylidene)lysine. Over 301-382 (NKQFRKCLVQ…PIPENKVCPM (82 aa)) the chain is Cytoplasmic. Positions 330–346 (RQGMTNESHTGEMSTIA) are enriched in polar residues. Positions 330–371 (RQGMTNESHTGEMSTIASRIPKDGSIPEKTQEHPGERRSLAH) are disordered. A compositionally biased stretch (basic and acidic residues) spans 349-368 (IPKDGSIPEKTQEHPGERRS).

The protein belongs to the G-protein coupled receptor 1 family. Opsin subfamily. As to expression, expressed in a subset of retinal horizontal cells as well as in retinal ganglion cells.

The protein localises to the membrane. This Rutilus rutilus (Roach) protein is Opsin-VA.